Reading from the N-terminus, the 412-residue chain is Translation initiation factor 2 subunit gamma (412 aa).

A tr-type G domain is found at 8–205 (QAEMNIGMVG…AMYEHFEPPE (198 aa)). The G1 stretch occupies residues 17 to 24 (GHVDHGKT). Mg(2+) contacts are provided by Asp20, Thr24, Gly45, and Ser47. 20–25 (DHGKTT) provides a ligand contact to GTP. The segment at 45 to 49 (GISIR) is G2. Positions 60, 63, 72, and 75 each coordinate Zn(2+). A G3 region spans residues 89–92 (DSPG). GTP-binding positions include 145-148 (NKID) and 183-185 (SAQ). A G4 region spans residues 145 to 148 (NKID). The interval 183–185 (SAQ) is G5.

This sequence belongs to the TRAFAC class translation factor GTPase superfamily. Classic translation factor GTPase family. EIF2G subfamily. Heterotrimer composed of an alpha, a beta and a gamma chain. Mg(2+) serves as cofactor.

The catalysed reaction is GTP + H2O = GDP + phosphate + H(+). EIF-2 functions in the early steps of protein synthesis by forming a ternary complex with GTP and initiator tRNA. This is Translation initiation factor 2 subunit gamma from Methanopyrus kandleri (strain AV19 / DSM 6324 / JCM 9639 / NBRC 100938).